Reading from the N-terminus, the 172-residue chain is Odorant-binding protein (172 aa).

The first 15 residues, 1 to 15 (MVKFLLIVLALGVSC), serve as a signal peptide directing secretion. 2 cysteine pairs are disulfide-bonded: Cys-60/Cys-64 and Cys-79/Cys-170.

The protein belongs to the calycin superfamily. Lipocalin family. Homodimer.

Its subcellular location is the secreted. In terms of biological role, this protein is found in nasal epithelium and it binds a wide variety of chemical odorants. This is Odorant-binding protein (Obp1f) from Rattus norvegicus (Rat).